The chain runs to 233 residues: Large ribosomal subunit protein uL1 (233 aa).

Belongs to the universal ribosomal protein uL1 family. Part of the 50S ribosomal subunit.

In terms of biological role, binds directly to 23S rRNA. The L1 stalk is quite mobile in the ribosome, and is involved in E site tRNA release. Its function is as follows. Protein L1 is also a translational repressor protein, it controls the translation of the L11 operon by binding to its mRNA. In Rhizobium johnstonii (strain DSM 114642 / LMG 32736 / 3841) (Rhizobium leguminosarum bv. viciae), this protein is Large ribosomal subunit protein uL1.